The following is a 484-amino-acid chain: Monocarboxylate transporter 2 (484 aa).

Topologically, residues 1 to 16 are cytoplasmic; sequence MPSETAVPPPHPIPPD. The helical transmembrane segment at 17-37 threads the bilayer; it reads GGWGWVVVGAAFISIGFSYAF. At 38 to 60 the chain is on the extracellular side; sequence PKAVTVFFKDIQQIFQASYSEIA. A helical transmembrane segment spans residues 61 to 81; the sequence is WISSIMLAVMYAGGPISSVLV. Residues 82 to 87 are Cytoplasmic-facing; sequence NNYGSR. The chain crosses the membrane as a helical span at residues 88–108; sequence PVVIIGGLLCCTGMILASFSN. Over 109-116 the chain is Extracellular; it reads SVLELYLT. The chain crosses the membrane as a helical span at residues 117–137; the sequence is IGFIGGLGLAFNLQPALTIIG. Topologically, residues 138-144 are cytoplasmic; that stretch reads KYFYRRR. A helical transmembrane segment spans residues 145–165; the sequence is PMANGLAMAGSPVFLSSLAPF. Topologically, residues 166–174 are extracellular; the sequence is NQYLFNSYG. Residues 175–195 form a helical membrane-spanning segment; that stretch reads WKGSFLILGGIFLHSCVAGCL. Residues 196-245 lie on the Cytoplasmic side of the membrane; it reads MRPVQTSPRKSKSKSKVGSRQDGSMKKASKVSTAEKINRFLDFSLFKHRG. Residues 201–224 form a disordered region; sequence TSPRKSKSKSKVGSRQDGSMKKAS. The helical transmembrane segment at 246–266 threads the bilayer; the sequence is FLIYLSGNVIMFLGFFAPIIF. The Extracellular portion of the chain corresponds to 267 to 282; sequence LAPYAKDKGVDEYNAA. The helical transmembrane segment at 283 to 303 threads the bilayer; that stretch reads LLLSVMAFVDMFARPTGGLIA. At 304–311 the chain is on the cytoplasmic side; it reads NSKLIRPR. A helical transmembrane segment spans residues 312-332; sequence IQYFFSFAIVFTGICHLLCPL. At 333–337 the chain is on the extracellular side; sequence ADTYP. Residues 338–358 form a helical membrane-spanning segment; that stretch reads ALVVYSIFFGYGFGSVSSVLF. At 359–372 the chain is on the cytoplasmic side; the sequence is ETLMDLVGPARFSS. Residues 373 to 393 form a helical membrane-spanning segment; it reads AVGLATIVECCPVLLGPPLAG. The Extracellular portion of the chain corresponds to 394–405; sequence KLVDKTKDYKYM. Residues 406-426 form a helical membrane-spanning segment; it reads YIASGTIVVISGIYLFIGNAI. The Cytoplasmic segment spans residues 427-484; it reads NYRLLAKERKREKARKKKSATHPSRESEALSRSKQDDVSVKVSNPHNSPSDRERESNI. The tract at residues 437-484 is disordered; sequence REKARKKKSATHPSRESEALSRSKQDDVSVKVSNPHNSPSDRERESNI. Basic and acidic residues-rich tracts occupy residues 449-465 and 475-484; these read PSRE…DDVS and PSDRERESNI.

The protein belongs to the major facilitator superfamily. Monocarboxylate porter (TC 2.A.1.13) family. As to quaternary structure, homodimer. Interacts with GRID2IP. Interacts with EMB; interaction mediates SLC16A7 targeting to the plasma membrane. Interacts with isoform 2 of BSG. Abundant on the surface of hepatocytes. Present on parietal cells of the oxyntic gland of the stomach, on the basolateral surface of epithelial cells in the collecting ducts of the kidney, on sperm tails throughout the epididymis. Expressed in mitochondria-rich skeletal muscle fibers and cardiac myocytes (at protein level).

It localises to the cell membrane. The protein localises to the basolateral cell membrane. It is found in the cytoplasm. It catalyses the reaction pyruvate(out) + H(+)(out) = pyruvate(in) + H(+)(in). The enzyme catalyses 3-methyl-2-oxobutanoate(out) + H(+)(out) = 3-methyl-2-oxobutanoate(in) + H(+)(in). The catalysed reaction is (S)-lactate(in) + H(+)(in) = (S)-lactate(out) + H(+)(out). It carries out the reaction acetoacetate(out) + H(+)(out) = acetoacetate(in) + H(+)(in). It catalyses the reaction (R)-3-hydroxybutanoate(out) + H(+)(out) = (R)-3-hydroxybutanoate(in) + H(+)(in). The enzyme catalyses 4-methyl-2-oxopentanoate(out) + H(+)(out) = 4-methyl-2-oxopentanoate(in) + H(+)(in). The catalysed reaction is (S)-3-hydroxybutanoate(out) + H(+)(out) = (S)-3-hydroxybutanoate(in) + H(+)(in). Transport activity exhibits steep dependence on substrate concentration. Substrate concentration sensitivity of SLC16A7 arises from the strong inter-subunit cooperativity of the SLC16A7 dimer during transport. Inhibited by AR-C155858. Its function is as follows. Proton-coupled monocarboxylate symporter. Catalyzes the rapid transport across the plasma membrane of monocarboxylates such as L-lactate, pyruvate and ketone bodies, acetoacetate, beta-hydroxybutyrate and acetate. Dimerization is functionally required and both subunits work cooperatively in transporting substrate. The sequence is that of Monocarboxylate transporter 2 (SLC16A7) from Mesocricetus auratus (Golden hamster).